The primary structure comprises 300 residues: 4-hydroxy-tetrahydrodipicolinate synthase (300 aa).

Residue T45 participates in pyruvate binding. The active-site Proton donor/acceptor is Y140. K169 acts as the Schiff-base intermediate with substrate in catalysis. I210 provides a ligand contact to pyruvate.

This sequence belongs to the DapA family. As to quaternary structure, homotetramer; dimer of dimers.

It localises to the cytoplasm. The enzyme catalyses L-aspartate 4-semialdehyde + pyruvate = (2S,4S)-4-hydroxy-2,3,4,5-tetrahydrodipicolinate + H2O + H(+). Its pathway is amino-acid biosynthesis; L-lysine biosynthesis via DAP pathway; (S)-tetrahydrodipicolinate from L-aspartate: step 3/4. Functionally, catalyzes the condensation of (S)-aspartate-beta-semialdehyde [(S)-ASA] and pyruvate to 4-hydroxy-tetrahydrodipicolinate (HTPA). The sequence is that of 4-hydroxy-tetrahydrodipicolinate synthase from Helicobacter pylori (strain Shi470).